The sequence spans 268 residues: Tryptophan synthase alpha chain (268 aa).

Active-site proton acceptor residues include glutamate 49 and aspartate 60.

Belongs to the TrpA family. Tetramer of two alpha and two beta chains.

The enzyme catalyses (1S,2R)-1-C-(indol-3-yl)glycerol 3-phosphate + L-serine = D-glyceraldehyde 3-phosphate + L-tryptophan + H2O. Its pathway is amino-acid biosynthesis; L-tryptophan biosynthesis; L-tryptophan from chorismate: step 5/5. Its function is as follows. The alpha subunit is responsible for the aldol cleavage of indoleglycerol phosphate to indole and glyceraldehyde 3-phosphate. In Photorhabdus laumondii subsp. laumondii (strain DSM 15139 / CIP 105565 / TT01) (Photorhabdus luminescens subsp. laumondii), this protein is Tryptophan synthase alpha chain.